The chain runs to 335 residues: GTPase Obg (335 aa).

An Obg domain is found at 1-158 (MFVDQITLEL…RLVELELKLI (158 aa)). The OBG-type G domain maps to 159-334 (ADIGLVGFPN…LHDLFKSKLS (176 aa)). GTP is bound by residues 165–172 (GFPNAGKS), 190–194 (FTTLH), 215–218 (DIPG), 285–288 (NKID), and 315–317 (SGL). Mg(2+) is bound by residues Ser172 and Thr192.

The protein belongs to the TRAFAC class OBG-HflX-like GTPase superfamily. OBG GTPase family. As to quaternary structure, monomer. Mg(2+) serves as cofactor.

The protein resides in the cytoplasm. An essential GTPase which binds GTP, GDP and possibly (p)ppGpp with moderate affinity, with high nucleotide exchange rates and a fairly low GTP hydrolysis rate. Plays a role in control of the cell cycle, stress response, ribosome biogenesis and in those bacteria that undergo differentiation, in morphogenesis control. The protein is GTPase Obg of Chlamydia muridarum (strain MoPn / Nigg).